A 322-amino-acid polypeptide reads, in one-letter code: 2-methylene-furan-3-one reductase (322 aa).

Residues Lys59, 174–175, 197–200, Tyr215, Ile253, 264–266, 311–312, and 311–322 each bind NADP(+); these read GV, STKK, FVL, RA, and RATGKVVVYPIP. Lys59 is a binding site for substrate.

Belongs to the zinc-containing alcohol dehydrogenase family. Quinone oxidoreductase subfamily. In terms of assembly, monomer. Post-translationally, the N-terminus is blocked.

The enzyme catalyses 4-hydroxy-2,5-dimethyl-furan-3(2H)-one + NADP(+) = 4-hydroxy-5-methyl-2-methylenefuran-3(2H)-one + NADPH + H(+). Its function is as follows. Enone oxidoreductase involved in the biosynthesis of 4-hydroxy-2,5-dimethyl-3(2H)-furanone (HDMF or furaneol), the key flavor compound in strawberries. Can use both NADH and NADPH as the electron donor. The sequence is that of 2-methylene-furan-3-one reductase (EO) from Fragaria ananassa (Strawberry).